The following is a 273-amino-acid chain: Rhamnulose-1-phosphate aldolase (273 aa).

Glu117 is a catalytic residue. Positions 140, 142, and 211 each coordinate Zn(2+).

The protein belongs to the aldolase class II family. RhaD subfamily. Requires Zn(2+) as cofactor.

Its subcellular location is the cytoplasm. The enzyme catalyses L-rhamnulose 1-phosphate = (S)-lactaldehyde + dihydroxyacetone phosphate. The protein operates within carbohydrate degradation; L-rhamnose degradation; glycerone phosphate from L-rhamnose: step 3/3. Functionally, catalyzes the reversible cleavage of L-rhamnulose-1-phosphate to dihydroxyacetone phosphate (DHAP) and L-lactaldehyde. The polypeptide is Rhamnulose-1-phosphate aldolase (Listeria monocytogenes serotype 4a (strain HCC23)).